The chain runs to 125 residues: Barwin (125 aa).

The residue at position 1 (Gln-1) is a Pyrrolidone carboxylic acid. The 125-residue stretch at 1 to 125 folds into the Barwin domain; that stretch reads QQANDVRATY…VNYQFVDCRD (125 aa). 3 disulfide bridges follow: Cys-31–Cys-63, Cys-52–Cys-86, and Cys-66–Cys-123.

Functionally, may be involved in a defense mechanism. Probable plant lectin. Binds weakly a chitin analog. In Hordeum vulgare (Barley), this protein is Barwin.